The chain runs to 937 residues: Aconitate hydratase A (937 aa).

The disordered stretch occupies residues 410–450 (MANEGGFQPGSTSDLDNYNASWPGEGESAAANAEGRPSNPV). The segment covering 418–429 (PGSTSDLDNYNA) has biased composition (polar residues). Residues 433 to 444 (GEGESAAANAEG) are compositionally biased toward low complexity. [4Fe-4S] cluster-binding residues include Cys-475, Cys-541, and Cys-544.

This sequence belongs to the aconitase/IPM isomerase family. Monomer. It depends on [4Fe-4S] cluster as a cofactor.

The catalysed reaction is citrate = D-threo-isocitrate. The enzyme catalyses (2S,3R)-3-hydroxybutane-1,2,3-tricarboxylate = 2-methyl-cis-aconitate + H2O. Its pathway is carbohydrate metabolism; tricarboxylic acid cycle; isocitrate from oxaloacetate: step 2/2. It functions in the pathway organic acid metabolism; propanoate degradation. In terms of biological role, involved in the catabolism of short chain fatty acids (SCFA) via the tricarboxylic acid (TCA)(acetyl degradation route) and probably via the 2-methylcitrate cycle I (propionate degradation route). Catalyzes the reversible isomerization of citrate to isocitrate via cis-aconitate. Could catalyze the hydration of 2-methyl-cis-aconitate to yield (2R,3S)-2-methylisocitrate. The apo form of AcnA functions as a RNA-binding regulatory protein. The chain is Aconitate hydratase A (acn) from Corynebacterium efficiens (strain DSM 44549 / YS-314 / AJ 12310 / JCM 11189 / NBRC 100395).